Consider the following 248-residue polypeptide: 3-deoxy-manno-octulosonate cytidylyltransferase (248 aa).

This sequence belongs to the KdsB family.

It localises to the cytoplasm. It carries out the reaction 3-deoxy-alpha-D-manno-oct-2-ulosonate + CTP = CMP-3-deoxy-beta-D-manno-octulosonate + diphosphate. It participates in nucleotide-sugar biosynthesis; CMP-3-deoxy-D-manno-octulosonate biosynthesis; CMP-3-deoxy-D-manno-octulosonate from 3-deoxy-D-manno-octulosonate and CTP: step 1/1. The protein operates within bacterial outer membrane biogenesis; lipopolysaccharide biosynthesis. In terms of biological role, activates KDO (a required 8-carbon sugar) for incorporation into bacterial lipopolysaccharide in Gram-negative bacteria. This Salmonella dublin (strain CT_02021853) protein is 3-deoxy-manno-octulosonate cytidylyltransferase.